Consider the following 392-residue polypeptide: Dual-specificity RNA methyltransferase RlmN (392 aa).

Glutamate 116 (proton acceptor) is an active-site residue. Positions 122–364 constitute a Radical SAM core domain; it reads EEGRGTLCVS…SPIRTPRGED (243 aa). Cysteine 129 and cysteine 369 are oxidised to a cystine. Residues cysteine 136, cysteine 140, and cysteine 143 each coordinate [4Fe-4S] cluster. S-adenosyl-L-methionine is bound by residues 195-196, serine 227, 249-251, and asparagine 326; these read GE and SFH. The active-site S-methylcysteine intermediate is cysteine 369.

The protein belongs to the radical SAM superfamily. RlmN family. It depends on [4Fe-4S] cluster as a cofactor.

The protein resides in the cytoplasm. It catalyses the reaction adenosine(2503) in 23S rRNA + 2 reduced [2Fe-2S]-[ferredoxin] + 2 S-adenosyl-L-methionine = 2-methyladenosine(2503) in 23S rRNA + 5'-deoxyadenosine + L-methionine + 2 oxidized [2Fe-2S]-[ferredoxin] + S-adenosyl-L-homocysteine. The enzyme catalyses adenosine(37) in tRNA + 2 reduced [2Fe-2S]-[ferredoxin] + 2 S-adenosyl-L-methionine = 2-methyladenosine(37) in tRNA + 5'-deoxyadenosine + L-methionine + 2 oxidized [2Fe-2S]-[ferredoxin] + S-adenosyl-L-homocysteine. Functionally, specifically methylates position 2 of adenine 2503 in 23S rRNA and position 2 of adenine 37 in tRNAs. m2A2503 modification seems to play a crucial role in the proofreading step occurring at the peptidyl transferase center and thus would serve to optimize ribosomal fidelity. The chain is Dual-specificity RNA methyltransferase RlmN from Cereibacter sphaeroides (strain ATCC 17025 / ATH 2.4.3) (Rhodobacter sphaeroides).